We begin with the raw amino-acid sequence, 538 residues long: Bifunctional purine biosynthesis protein PurH (538 aa).

In terms of domain architecture, MGS-like spans 8–158; the sequence is IPAPDKVEIK…KNHAYVTILT (151 aa).

Belongs to the PurH family.

It catalyses the reaction (6R)-10-formyltetrahydrofolate + 5-amino-1-(5-phospho-beta-D-ribosyl)imidazole-4-carboxamide = 5-formamido-1-(5-phospho-D-ribosyl)imidazole-4-carboxamide + (6S)-5,6,7,8-tetrahydrofolate. The enzyme catalyses IMP + H2O = 5-formamido-1-(5-phospho-D-ribosyl)imidazole-4-carboxamide. The protein operates within purine metabolism; IMP biosynthesis via de novo pathway; 5-formamido-1-(5-phospho-D-ribosyl)imidazole-4-carboxamide from 5-amino-1-(5-phospho-D-ribosyl)imidazole-4-carboxamide (10-formyl THF route): step 1/1. It participates in purine metabolism; IMP biosynthesis via de novo pathway; IMP from 5-formamido-1-(5-phospho-D-ribosyl)imidazole-4-carboxamide: step 1/1. This is Bifunctional purine biosynthesis protein PurH from Rhizobium etli (strain CIAT 652).